The sequence spans 474 residues: tRNA (guanine(37)-N(1))-methyltransferase (474 aa).

Residues histidine 234, 274 to 275 (DL), 303 to 304 (DA), and asparagine 345 contribute to the S-adenosyl-L-methionine site. The span at 452–464 (EPEAQCESEEAEE) shows a compositional bias: acidic residues. A disordered region spans residues 452–474 (EPEAQCESEEAEEPSSKRIKVDT). A compositionally biased stretch (basic and acidic residues) spans 465-474 (PSSKRIKVDT).

The protein belongs to the class I-like SAM-binding methyltransferase superfamily. TRM5/TYW2 family. As to quaternary structure, monomer.

Its subcellular location is the mitochondrion matrix. It is found in the nucleus. It localises to the cytoplasm. The catalysed reaction is guanosine(37) in tRNA + S-adenosyl-L-methionine = N(1)-methylguanosine(37) in tRNA + S-adenosyl-L-homocysteine + H(+). In terms of biological role, specifically methylates the N1 position of guanosine-37 in various cytoplasmic and mitochondrial tRNAs. Methylation is not dependent on the nature of the nucleoside 5' of the target nucleoside. This is the first step in the biosynthesis of wybutosine (yW), a modified base adjacent to the anticodon of tRNAs and required for accurate decoding. This Caenorhabditis elegans protein is tRNA (guanine(37)-N(1))-methyltransferase.